The sequence spans 226 residues: UPF0173 metal-dependent hydrolase CHY_0920 (226 aa).

Belongs to the UPF0173 family.

The protein is UPF0173 metal-dependent hydrolase CHY_0920 of Carboxydothermus hydrogenoformans (strain ATCC BAA-161 / DSM 6008 / Z-2901).